Consider the following 198-residue polypeptide: A-type ATP synthase subunit E (198 aa).

This sequence belongs to the V-ATPase E subunit family. Has multiple subunits with at least A(3), B(3), C, D, E, F, H, I and proteolipid K(x).

It is found in the cell membrane. Its function is as follows. Component of the A-type ATP synthase that produces ATP from ADP in the presence of a proton gradient across the membrane. This chain is A-type ATP synthase subunit E, found in Pyrococcus horikoshii (strain ATCC 700860 / DSM 12428 / JCM 9974 / NBRC 100139 / OT-3).